Consider the following 390-residue polypeptide: 1-deoxy-D-xylulose 5-phosphate reductoisomerase (390 aa).

The NADPH site is built by threonine 10, glycine 11, serine 12, valine 13, and asparagine 124. Lysine 125 contacts 1-deoxy-D-xylulose 5-phosphate. An NADPH-binding site is contributed by glutamate 126. Aspartate 150 contributes to the Mn(2+) binding site. 1-deoxy-D-xylulose 5-phosphate is bound by residues serine 151, glutamate 152, serine 181, and histidine 204. Glutamate 152 provides a ligand contact to Mn(2+). Position 210 (glycine 210) interacts with NADPH. Positions 217, 222, 223, and 226 each coordinate 1-deoxy-D-xylulose 5-phosphate. Glutamate 226 lines the Mn(2+) pocket.

This sequence belongs to the DXR family. Requires Mg(2+) as cofactor. Mn(2+) serves as cofactor.

The enzyme catalyses 2-C-methyl-D-erythritol 4-phosphate + NADP(+) = 1-deoxy-D-xylulose 5-phosphate + NADPH + H(+). The protein operates within isoprenoid biosynthesis; isopentenyl diphosphate biosynthesis via DXP pathway; isopentenyl diphosphate from 1-deoxy-D-xylulose 5-phosphate: step 1/6. In terms of biological role, catalyzes the NADPH-dependent rearrangement and reduction of 1-deoxy-D-xylulose-5-phosphate (DXP) to 2-C-methyl-D-erythritol 4-phosphate (MEP). This is 1-deoxy-D-xylulose 5-phosphate reductoisomerase from Janthinobacterium sp. (strain Marseille) (Minibacterium massiliensis).